The chain runs to 259 residues: V-type proton ATPase subunit D (259 aa).

The tract at residues 214-259 (KLKEQEAAQRALEGPPKEEAGGTHSENQPPRNLLAVEEDNLPVLFN) is disordered.

This sequence belongs to the V-ATPase D subunit family. As to quaternary structure, V-ATPase is a heteromultimeric enzyme made up of two complexes: the ATP-hydrolytic V1 complex and the proton translocation V0 complex. The V1 complex consists of three catalytic AB heterodimers that form a heterohexamer, three peripheral stalks each consisting of EG heterodimers, one central rotor including subunits D and F, and the regulatory subunits C and H. The proton translocation complex V0 consists of the proton transport subunit a, a ring of proteolipid subunits c9c'', rotary subunit d, and The proton translocation complex V0 consists of the proton transport subunit a, a ring of proteolipid subunits c9c'', rotary subunit d, subunits e and f, and the accessory subunits vah-19/Ac45 and vah-20/PRR.

Subunit of the V1 complex of vacuolar(H+)-ATPase (V-ATPase), a multisubunit enzyme composed of a peripheral complex (V1) that hydrolyzes ATP and a membrane integral complex (V0) that translocates protons. V-ATPase is responsible for acidifying and maintaining the pH of intracellular compartments and in some cell types, is targeted to the plasma membrane, where it is responsible for acidifying the extracellular environment. This chain is V-type proton ATPase subunit D, found in Caenorhabditis briggsae.